A 142-amino-acid chain; its full sequence is Small ribosomal subunit protein bS6 (142 aa).

The segment covering 110-133 (NKKPSHAKEKHEKTEHTHSHHTEE) has biased composition (basic and acidic residues). Residues 110–142 (NKKPSHAKEKHEKTEHTHSHHTEEAESVGSHSE) are disordered.

Belongs to the bacterial ribosomal protein bS6 family.

Its function is as follows. Binds together with bS18 to 16S ribosomal RNA. This is Small ribosomal subunit protein bS6 (rpsF) from Helicobacter pylori (strain ATCC 700392 / 26695) (Campylobacter pylori).